Here is a 102-residue protein sequence, read N- to C-terminus: MAKGQSLQDPFLNALRRERVPVSIYLVNGIKLQGQIESFDQFVILLKNTVSQMVYKHAISTVVPSRPVSHHSNNAGGGSSNYHHGGSAQGSSAPQQDSDDAE.

Positions 9–68 (DPFLNALRRERVPVSIYLVNGIKLQGQIESFDQFVILLKNTVSQMVYKHAISTVVPSRPV) constitute a Sm domain. The interval 63–102 (VPSRPVSHHSNNAGGGSSNYHHGGSAQGSSAPQQDSDDAE) is disordered. The segment covering 70–86 (HHSNNAGGGSSNYHHGG) has biased composition (low complexity).

This sequence belongs to the Hfq family. As to quaternary structure, homohexamer.

Functionally, RNA chaperone that binds small regulatory RNA (sRNAs) and mRNAs to facilitate mRNA translational regulation in response to envelope stress, environmental stress and changes in metabolite concentrations. Also binds with high specificity to tRNAs. The protein is RNA-binding protein Hfq of Klebsiella pneumoniae (strain 342).